The following is a 103-amino-acid chain: uncharacterized protein (103 aa).

Transmembrane regions (helical) follow at residues 13 to 33 (LLPF…YCIL) and 77 to 97 (FSIY…PYLF).

The protein resides in the endoplasmic reticulum membrane. This is an uncharacterized protein from Schizosaccharomyces pombe (strain 972 / ATCC 24843) (Fission yeast).